A 65-amino-acid polypeptide reads, in one-letter code: MKISEIREMSAQEITGKLTELKKEFFNLRFQHGVGQLENTAILPSIRKDIARLMTVCREMNLNIS.

The protein belongs to the universal ribosomal protein uL29 family.

This chain is Large ribosomal subunit protein uL29, found in Desulforapulum autotrophicum (strain ATCC 43914 / DSM 3382 / VKM B-1955 / HRM2) (Desulfobacterium autotrophicum).